We begin with the raw amino-acid sequence, 254 residues long: 3-deoxy-manno-octulosonate cytidylyltransferase (254 aa).

This sequence belongs to the KdsB family.

Its subcellular location is the cytoplasm. It carries out the reaction 3-deoxy-alpha-D-manno-oct-2-ulosonate + CTP = CMP-3-deoxy-beta-D-manno-octulosonate + diphosphate. It functions in the pathway nucleotide-sugar biosynthesis; CMP-3-deoxy-D-manno-octulosonate biosynthesis; CMP-3-deoxy-D-manno-octulosonate from 3-deoxy-D-manno-octulosonate and CTP: step 1/1. Its pathway is bacterial outer membrane biogenesis; lipopolysaccharide biosynthesis. In terms of biological role, activates KDO (a required 8-carbon sugar) for incorporation into bacterial lipopolysaccharide in Gram-negative bacteria. The sequence is that of 3-deoxy-manno-octulosonate cytidylyltransferase from Pseudoalteromonas atlantica (strain T6c / ATCC BAA-1087).